Here is a 380-residue protein sequence, read N- to C-terminus: 1-deoxy-D-xylulose 5-phosphate reductoisomerase (380 aa).

NADPH contacts are provided by Ser-10, Gly-11, Ser-12, Ile-13, Gly-36, Lys-37, Asn-38, and Asn-120. Lys-121 is a binding site for 1-deoxy-D-xylulose 5-phosphate. NADPH is bound at residue Glu-122. Mn(2+) is bound at residue Asp-146. The 1-deoxy-D-xylulose 5-phosphate site is built by Ser-147, Glu-148, Ser-172, and His-195. Residue Glu-148 coordinates Mn(2+). Gly-201 serves as a coordination point for NADPH. The 1-deoxy-D-xylulose 5-phosphate site is built by Ser-208, Asn-213, Lys-214, and Glu-217. Position 217 (Glu-217) interacts with Mn(2+).

Belongs to the DXR family. Mg(2+) is required as a cofactor. The cofactor is Mn(2+).

The catalysed reaction is 2-C-methyl-D-erythritol 4-phosphate + NADP(+) = 1-deoxy-D-xylulose 5-phosphate + NADPH + H(+). The protein operates within isoprenoid biosynthesis; isopentenyl diphosphate biosynthesis via DXP pathway; isopentenyl diphosphate from 1-deoxy-D-xylulose 5-phosphate: step 1/6. Its function is as follows. Catalyzes the NADPH-dependent rearrangement and reduction of 1-deoxy-D-xylulose-5-phosphate (DXP) to 2-C-methyl-D-erythritol 4-phosphate (MEP). The protein is 1-deoxy-D-xylulose 5-phosphate reductoisomerase of Bacillus cereus (strain Q1).